The primary structure comprises 338 residues: Glycerol-3-phosphate dehydrogenase [NAD(P)+] (338 aa).

NADPH is bound by residues S14, Y15, H35, and K109. Residues K109, G138, and T140 each coordinate sn-glycerol 3-phosphate. A142 lines the NADPH pocket. Sn-glycerol 3-phosphate is bound by residues K194, D247, S257, R258, and N259. Catalysis depends on K194, which acts as the Proton acceptor. Position 258 (R258) interacts with NADPH. V282 and E284 together coordinate NADPH.

This sequence belongs to the NAD-dependent glycerol-3-phosphate dehydrogenase family.

The protein resides in the cytoplasm. It catalyses the reaction sn-glycerol 3-phosphate + NAD(+) = dihydroxyacetone phosphate + NADH + H(+). It carries out the reaction sn-glycerol 3-phosphate + NADP(+) = dihydroxyacetone phosphate + NADPH + H(+). It functions in the pathway membrane lipid metabolism; glycerophospholipid metabolism. In terms of biological role, catalyzes the reduction of the glycolytic intermediate dihydroxyacetone phosphate (DHAP) to sn-glycerol 3-phosphate (G3P), the key precursor for phospholipid synthesis. The polypeptide is Glycerol-3-phosphate dehydrogenase [NAD(P)+] (Shewanella baltica (strain OS185)).